The primary structure comprises 409 residues: NADH-quinone oxidoreductase subunit D (409 aa).

The protein belongs to the complex I 49 kDa subunit family. As to quaternary structure, NDH-1 is composed of 14 different subunits. Subunits NuoB, C, D, E, F, and G constitute the peripheral sector of the complex.

Its subcellular location is the cell inner membrane. The enzyme catalyses a quinone + NADH + 5 H(+)(in) = a quinol + NAD(+) + 4 H(+)(out). NDH-1 shuttles electrons from NADH, via FMN and iron-sulfur (Fe-S) centers, to quinones in the respiratory chain. The immediate electron acceptor for the enzyme in this species is believed to be ubiquinone. Couples the redox reaction to proton translocation (for every two electrons transferred, four hydrogen ions are translocated across the cytoplasmic membrane), and thus conserves the redox energy in a proton gradient. The protein is NADH-quinone oxidoreductase subunit D of Helicobacter acinonychis (strain Sheeba).